Here is an 807-residue protein sequence, read N- to C-terminus: Glycerol-3-phosphate acyltransferase (807 aa).

Residues 305–310 (CHRSHM) carry the HXXXXD motif motif.

The protein belongs to the GPAT/DAPAT family.

It localises to the cell inner membrane. It catalyses the reaction sn-glycerol 3-phosphate + an acyl-CoA = a 1-acyl-sn-glycero-3-phosphate + CoA. It functions in the pathway phospholipid metabolism; CDP-diacylglycerol biosynthesis; CDP-diacylglycerol from sn-glycerol 3-phosphate: step 1/3. The chain is Glycerol-3-phosphate acyltransferase from Klebsiella pneumoniae subsp. pneumoniae (strain ATCC 700721 / MGH 78578).